Reading from the N-terminus, the 179-residue chain is Large ribosomal subunit protein uL5 (179 aa).

The protein belongs to the universal ribosomal protein uL5 family. In terms of assembly, part of the 50S ribosomal subunit; part of the 5S rRNA/L5/L18/L25 subcomplex. Contacts the 5S rRNA and the P site tRNA. Forms a bridge to the 30S subunit in the 70S ribosome.

This is one of the proteins that bind and probably mediate the attachment of the 5S RNA into the large ribosomal subunit, where it forms part of the central protuberance. In the 70S ribosome it contacts protein S13 of the 30S subunit (bridge B1b), connecting the 2 subunits; this bridge is implicated in subunit movement. Contacts the P site tRNA; the 5S rRNA and some of its associated proteins might help stabilize positioning of ribosome-bound tRNAs. This is Large ribosomal subunit protein uL5 from Burkholderia vietnamiensis (strain G4 / LMG 22486) (Burkholderia cepacia (strain R1808)).